Consider the following 208-residue polypeptide: Uracil phosphoribosyltransferase (208 aa).

Residues Arg-78, Arg-103, and 130-138 (DPMLATGGS) contribute to the 5-phospho-alpha-D-ribose 1-diphosphate site. Uracil is bound by residues Ile-193 and 198-200 (GDA). Asp-199 provides a ligand contact to 5-phospho-alpha-D-ribose 1-diphosphate.

This sequence belongs to the UPRTase family. It depends on Mg(2+) as a cofactor.

The enzyme catalyses UMP + diphosphate = 5-phospho-alpha-D-ribose 1-diphosphate + uracil. It functions in the pathway pyrimidine metabolism; UMP biosynthesis via salvage pathway; UMP from uracil: step 1/1. Its activity is regulated as follows. Allosterically activated by GTP. Functionally, catalyzes the conversion of uracil and 5-phospho-alpha-D-ribose 1-diphosphate (PRPP) to UMP and diphosphate. The chain is Uracil phosphoribosyltransferase from Wolinella succinogenes (strain ATCC 29543 / DSM 1740 / CCUG 13145 / JCM 31913 / LMG 7466 / NCTC 11488 / FDC 602W) (Vibrio succinogenes).